A 452-amino-acid chain; its full sequence is MLSKKSRAVFLTAVASGTMLNPLNSSMISLALHSIQHEFHLSFTTVSWLISSFYLASAVAQPVTGKLGDLIGRKRLFLFGLILVAVSAIGAPFAPTFMTLLVMRLFQSVGSSAIYPSGVGLIRNHIHERQASALAVLSIFASAMTALGPTAGGFLIVWGGWPAIFIVNLPFIILSFLLGLYMFPKDQKKGAGIKTIIRQLDILGIVLFAGGIIFLLSFLLSFSTSPHAVEGVLGLLLLCAFVWRELKTDKPFIDVRLFKTQRNLSAVYVQFILLNVFFYCLFFGLPSYFQDEMHLSVQTSGLFMLFMSGMSIVVSPLTGKWIDRSGVVKPIFAGALLMTAGAVLLTIFFINVQTIGKGLILSLLGIGYGLGNVALQAAMLETSPSNMVGTTSGLFQTCRYLGSILSSVILGILFGKEITAAHFDMMGIIMIIAGGASLLMAVRFAALMKTAS.

14 consecutive transmembrane segments (helical) span residues 8–28, 39–59, 77–97, 100–122, 134–156, 161–183, 203–222, 226–243, 266–286, 302–322, 330–350, 359–379, 393–415, and 425–447; these read AVFLTAVASGTMLNPLNSSMI, FHLSFTTVSWLISSFYLASAV, FLFGLILVAVSAIGAPFAPTF, LLVMRLFQSVGSSAIYPSGVGLI, LAVLSIFASAMTALGPTAGGFLI, WPAIFIVNLPFIILSFLLGLYMF, LGIVLFAGGIIFLLSFLLSF, PHAVEGVLGLLLLCAFVW, AVYVQFILLNVFFYCLFFGLP, LFMLFMSGMSIVVSPLTGKWI, PIFAGALLMTAGAVLLTIFFI, LILSLLGIGYGLGNVALQAAM, GLFQTCRYLGSILSSVILGILFG, and MMGIIMIIAGGASLLMAVRFAAL.

It belongs to the major facilitator superfamily.

The protein localises to the cell membrane. This is an uncharacterized protein from Bacillus subtilis (strain 168).